We begin with the raw amino-acid sequence, 357 residues long: Probable glutamine amidotransferase DUG3 (357 aa).

C2 acts as the For GATase activity in catalysis. The 259-residue stretch at 2–260 (CRFLIFKGKQ…PGEYRVERLD (259 aa)) folds into the Glutamine amidotransferase type-2 domain.

The protein belongs to the DUG3 family. In terms of assembly, component of the GSH degradosomal complex composed of at least DUG1, DUG2 and DUG3.

It is found in the cytoplasm. Its function is as follows. Component of the GSH degradosomal complex involved in the degradation of glutathione (GSH) and other peptides containing a gamma-glu-X bond. In Saccharomyces cerevisiae (strain ATCC 204508 / S288c) (Baker's yeast), this protein is Probable glutamine amidotransferase DUG3 (DUG3).